Here is a 146-residue protein sequence, read N- to C-terminus: Hemoglobin subunit beta (146 aa).

V1 carries the post-translational modification N-acetylvaline. Residues 2–146 (HLTADEKSAV…VATALGHKYH (145 aa)) form the Globin domain. T12 is subject to Phosphothreonine. S44 carries the post-translational modification Phosphoserine. K59 carries the post-translational modification N6-acetyllysine. H63 contacts heme b. K82 carries the post-translational modification N6-acetyllysine. H92 provides a ligand contact to heme b. S-nitrosocysteine is present on C93. Residue K144 is modified to N6-acetyllysine.

Belongs to the globin family. Heterotetramer of two alpha chains and two beta chains. As to expression, red blood cells.

Its function is as follows. Involved in oxygen transport from the lung to the various peripheral tissues. The sequence is that of Hemoglobin subunit beta (HBB) from Antrozous pallidus (Pallid bat).